Here is a 425-residue protein sequence, read N- to C-terminus: Non-structural protein 2 (425 aa).

Residues 29-64 (VSFDELVALREENAKLKQENEALKAKLHRLESDWTT) adopt a coiled-coil conformation.

The protein is Non-structural protein 2 (Segment-6) of Banna virus (BAV).